Reading from the N-terminus, the 205-residue chain is Adenylyl-sulfate kinase (205 aa).

31–38 is an ATP binding site; sequence GLSGAGKS. Residue S105 is the Phosphoserine intermediate of the active site.

This sequence belongs to the APS kinase family.

The catalysed reaction is adenosine 5'-phosphosulfate + ATP = 3'-phosphoadenylyl sulfate + ADP + H(+). The protein operates within sulfur metabolism; hydrogen sulfide biosynthesis; sulfite from sulfate: step 2/3. In terms of biological role, catalyzes the synthesis of activated sulfate. The polypeptide is Adenylyl-sulfate kinase (Shewanella baltica (strain OS195)).